Consider the following 475-residue polypeptide: Ankyrin repeat, SAM and basic leucine zipper domain-containing protein 1 (475 aa).

The disordered stretch occupies residues 1 to 22; sequence MAAGALRGLPVAGGGESSESED. Serine 17, serine 18, and serine 20 each carry phosphoserine. ANK repeat units lie at residues 45-74, 78-107, 110-144, 148-177, 181-210, and 214-243; these read EKKE…SVDS, YGWT…NASF, DKQT…DPNV, RLMT…EVNT, NGYT…NKML, and DGKM…PLEG. An SAM domain is found at 272-334; that stretch reads SYTAFGDLEV…KILATLKELQ (63 aa).

Interacts with DDX4, PIWIL1, RANBP9 and TDRD1.

It is found in the cytoplasm. Plays a central role during spermatogenesis by repressing transposable elements and preventing their mobilization, which is essential for the germline integrity. Acts via the piRNA metabolic process, which mediates the repression of transposable elements during meiosis by forming complexes composed of piRNAs and Piwi proteins and governs the methylation and subsequent repression of transposons. Its association with pi-bodies suggests a participation in the primary piRNAs metabolic process. Required prior to the pachytene stage to facilitate the production of multiple types of piRNAs, including those associated with repeats involved in the regulation of retrotransposons. May act by mediating protein-protein interactions during germ cell maturation. The chain is Ankyrin repeat, SAM and basic leucine zipper domain-containing protein 1 (ASZ1) from Colobus guereza (Mantled guereza).